We begin with the raw amino-acid sequence, 600 residues long: 1-deoxy-D-xylulose-5-phosphate synthase (600 aa).

Thiamine diphosphate contacts are provided by residues His63 and 104-106 (GHS). Residue Asp135 participates in Mg(2+) binding. Residues 136–137 (GA), Asn164, Tyr271, and Glu352 contribute to the thiamine diphosphate site. Asn164 serves as a coordination point for Mg(2+).

The protein belongs to the transketolase family. DXPS subfamily. As to quaternary structure, homodimer. Mg(2+) serves as cofactor. Thiamine diphosphate is required as a cofactor.

The catalysed reaction is D-glyceraldehyde 3-phosphate + pyruvate + H(+) = 1-deoxy-D-xylulose 5-phosphate + CO2. It functions in the pathway metabolic intermediate biosynthesis; 1-deoxy-D-xylulose 5-phosphate biosynthesis; 1-deoxy-D-xylulose 5-phosphate from D-glyceraldehyde 3-phosphate and pyruvate: step 1/1. Its function is as follows. Catalyzes the acyloin condensation reaction between C atoms 2 and 3 of pyruvate and glyceraldehyde 3-phosphate to yield 1-deoxy-D-xylulose-5-phosphate (DXP). In Campylobacter fetus subsp. fetus (strain 82-40), this protein is 1-deoxy-D-xylulose-5-phosphate synthase.